A 296-amino-acid chain; its full sequence is Thymidylate synthase (296 aa).

Residues Arg-24 and 151–152 (RR) each bind dUMP. Cys-171 serves as the catalytic Nucleophile. DUMP-binding positions include 197 to 200 (RSAD), Asn-208, and 238 to 240 (HVY). Asp-200 contributes to the (6R)-5,10-methylene-5,6,7,8-tetrahydrofolate binding site.

This sequence belongs to the thymidylate synthase family. As to quaternary structure, homodimer.

The catalysed reaction is dUMP + (6R)-5,10-methylene-5,6,7,8-tetrahydrofolate = 7,8-dihydrofolate + dTMP. Its pathway is pyrimidine metabolism; dTTP biosynthesis. The sequence is that of Thymidylate synthase (tms1) from Agaricus bisporus (White button mushroom).